A 517-amino-acid polypeptide reads, in one-letter code: ATP synthase subunit alpha 2 (517 aa).

173 to 180 is a binding site for ATP; sequence GDRQTGKT.

Belongs to the ATPase alpha/beta chains family. As to quaternary structure, F-type ATPases have 2 components, CF(1) - the catalytic core - and CF(0) - the membrane proton channel. CF(1) has five subunits: alpha(3), beta(3), gamma(1), delta(1), epsilon(1). CF(0) has three main subunits: a(1), b(2) and c(9-12). The alpha and beta chains form an alternating ring which encloses part of the gamma chain. CF(1) is attached to CF(0) by a central stalk formed by the gamma and epsilon chains, while a peripheral stalk is formed by the delta and b chains.

It is found in the cell inner membrane. The catalysed reaction is ATP + H2O + 4 H(+)(in) = ADP + phosphate + 5 H(+)(out). Its function is as follows. Produces ATP from ADP in the presence of a proton gradient across the membrane. The alpha chain is a regulatory subunit. The polypeptide is ATP synthase subunit alpha 2 (Legionella pneumophila subsp. pneumophila (strain Philadelphia 1 / ATCC 33152 / DSM 7513)).